The following is a 496-amino-acid chain: Endoglucanase (496 aa).

An N-terminal signal peptide occupies residues 1 to 23 (MGYHSVFIAVFLWSSMVCHNGLA). The Nucleophile role is filled by D93. Active-site residues include H415, D467, and E476.

Belongs to the glycosyl hydrolase 9 (cellulase E) family.

The catalysed reaction is Endohydrolysis of (1-&gt;4)-beta-D-glucosidic linkages in cellulose, lichenin and cereal beta-D-glucans.. Involved in ripening fruit process. The polypeptide is Endoglucanase (Phaseolus vulgaris (Kidney bean)).